The chain runs to 161 residues: Probable K(+)/H(+) antiporter subunit E (161 aa).

Transmembrane regions (helical) follow at residues 4 to 21 (WFPY…WLLL) and 28 to 50 (GSIV…LQPA).

This sequence belongs to the CPA3 antiporters (TC 2.A.63) subunit E family. May form a hetero-oligomeric complex that consists of six subunits: PhaAB, PhaC, PhaD, PhaE, PhaF and PhaG.

It is found in the cell membrane. Functionally, part of a K(+) efflux system which is required for the adaptation of R.meliloti to alkaline pH as well as for the infection process during symbiotic nodule development. In Rhizobium meliloti (strain 1021) (Ensifer meliloti), this protein is Probable K(+)/H(+) antiporter subunit E (phaE).